Here is a 96-residue protein sequence, read N- to C-terminus: Aspartyl/glutamyl-tRNA(Asn/Gln) amidotransferase subunit C (96 aa).

This sequence belongs to the GatC family. Heterotrimer of A, B and C subunits.

It carries out the reaction L-glutamyl-tRNA(Gln) + L-glutamine + ATP + H2O = L-glutaminyl-tRNA(Gln) + L-glutamate + ADP + phosphate + H(+). The enzyme catalyses L-aspartyl-tRNA(Asn) + L-glutamine + ATP + H2O = L-asparaginyl-tRNA(Asn) + L-glutamate + ADP + phosphate + 2 H(+). Allows the formation of correctly charged Asn-tRNA(Asn) or Gln-tRNA(Gln) through the transamidation of misacylated Asp-tRNA(Asn) or Glu-tRNA(Gln) in organisms which lack either or both of asparaginyl-tRNA or glutaminyl-tRNA synthetases. The reaction takes place in the presence of glutamine and ATP through an activated phospho-Asp-tRNA(Asn) or phospho-Glu-tRNA(Gln). The sequence is that of Aspartyl/glutamyl-tRNA(Asn/Gln) amidotransferase subunit C from Acaryochloris marina (strain MBIC 11017).